The chain runs to 135 residues: Universal stress protein Aq_178 (135 aa).

It belongs to the universal stress protein A family.

The sequence is that of Universal stress protein Aq_178 from Aquifex aeolicus (strain VF5).